The following is a 396-amino-acid chain: 1-deoxy-D-xylulose 5-phosphate reductoisomerase (396 aa).

NADPH-binding residues include T15, G16, S17, I18, G41, and N129. 1-deoxy-D-xylulose 5-phosphate is bound at residue K130. Position 131 (E131) interacts with NADPH. D155 provides a ligand contact to Mn(2+). The 1-deoxy-D-xylulose 5-phosphate site is built by S156, E157, S182, and H205. E157 provides a ligand contact to Mn(2+). G211 serves as a coordination point for NADPH. The 1-deoxy-D-xylulose 5-phosphate site is built by S218, N223, K224, and E227. E227 serves as a coordination point for Mn(2+).

Belongs to the DXR family. It depends on Mg(2+) as a cofactor. Requires Mn(2+) as cofactor.

The catalysed reaction is 2-C-methyl-D-erythritol 4-phosphate + NADP(+) = 1-deoxy-D-xylulose 5-phosphate + NADPH + H(+). It functions in the pathway isoprenoid biosynthesis; isopentenyl diphosphate biosynthesis via DXP pathway; isopentenyl diphosphate from 1-deoxy-D-xylulose 5-phosphate: step 1/6. Its function is as follows. Catalyzes the NADPH-dependent rearrangement and reduction of 1-deoxy-D-xylulose-5-phosphate (DXP) to 2-C-methyl-D-erythritol 4-phosphate (MEP). The polypeptide is 1-deoxy-D-xylulose 5-phosphate reductoisomerase (Xanthomonas euvesicatoria pv. vesicatoria (strain 85-10) (Xanthomonas campestris pv. vesicatoria)).